We begin with the raw amino-acid sequence, 83 residues long: Apolipoprotein C-I (83 aa).

Residues 1–26 (MRLILSLPVLAVVLAMVLEGPAPAQA) form the signal peptide.

It belongs to the apolipoprotein C1 family.

The protein localises to the secreted. Inhibitor of lipoprotein binding to the low density lipoprotein (LDL) receptor, LDL receptor-related protein, and very low density lipoprotein (VLDL) receptor. Associates with high density lipoproteins (HDL) and the triacylglycerol-rich lipoproteins in the plasma and makes up about 10% of the protein of the VLDL and 2% of that of HDL. Appears to interfere directly with fatty acid uptake and is also the major plasma inhibitor of cholesteryl ester transfer protein (CETP). Binds free fatty acids and reduces their intracellular esterification. Modulates the interaction of APOE with beta-migrating VLDL and inhibits binding of beta-VLDL to the LDL receptor-related protein. This Eonycteris spelaea (Lesser dawn bat) protein is Apolipoprotein C-I (APOC1).